The primary structure comprises 605 residues: Adenine deaminase (605 aa).

Belongs to the metallo-dependent hydrolases superfamily. Adenine deaminase family. Requires Mn(2+) as cofactor.

It carries out the reaction adenine + H2O + H(+) = hypoxanthine + NH4(+). The sequence is that of Adenine deaminase from Mesorhizobium japonicum (strain LMG 29417 / CECT 9101 / MAFF 303099) (Mesorhizobium loti (strain MAFF 303099)).